The following is a 274-amino-acid chain: MRKVAIYGKGGIGKSTTTQNTVAGLAEMGMKVMVVGCDPKADSTRLLLGGLQQKTVLDTLREEGEEVELEDIIKEGYRQTRCTESGGPEPGVGCAGRGIITSVNLLEQLGAYDKEWGLDYVFYDVLGDVVCGGFAMPIRDGKAEEIYIVCSGEMMAMYAANNICKGILKYADAGGVRLGGLICNSRKVDNEQAMIEELARKIGTQMIHFVPRDNFVQRAEINRKTVIDYDPTHGQADEYRALARKIHENKMFVIPKPLEIEELESLLIDFGIAN.

8–15 (GKGGIGKS) contacts ATP. C94 is a binding site for [4Fe-4S] cluster. Residue R97 is modified to ADP-ribosylarginine; by dinitrogenase reductase ADP-ribosyltransferase. A [4Fe-4S] cluster-binding site is contributed by C131.

This sequence belongs to the NifH/BchL/ChlL family. In terms of assembly, homodimer. [4Fe-4S] cluster serves as cofactor. In terms of processing, the reversible ADP-ribosylation of Arg-97 inactivates the nitrogenase reductase and regulates nitrogenase activity.

The enzyme catalyses N2 + 8 reduced [2Fe-2S]-[ferredoxin] + 16 ATP + 16 H2O = H2 + 8 oxidized [2Fe-2S]-[ferredoxin] + 2 NH4(+) + 16 ADP + 16 phosphate + 6 H(+). Its function is as follows. The key enzymatic reactions in nitrogen fixation are catalyzed by the nitrogenase complex, which has 2 components: the iron protein and the molybdenum-iron protein. This chain is Nitrogenase iron protein, found in Chlorobium phaeobacteroides (strain DSM 266 / SMG 266 / 2430).